A 77-amino-acid chain; its full sequence is U8-lycotoxin-Ls1q (77 aa).

An N-terminal signal peptide occupies residues methionine 1–alanine 20. The propeptide occupies glutamine 21 to lysine 26.

It belongs to the neurotoxin 19 (CSTX) family. 08 (U8-Lctx) subfamily. Contains 4 disulfide bonds. Expressed by the venom gland.

The protein resides in the secreted. This is U8-lycotoxin-Ls1q from Lycosa singoriensis (Wolf spider).